The following is a 457-amino-acid chain: Glycerol-3-phosphate acyltransferase 3 (457 aa).

The chain crosses the membrane as a helical span at residues 14-34 (WLTLVGSLILLPSAFGLSLGI). 2 positions are modified to phosphoserine: Ser-68 and Ser-77. 2 helical membrane-spanning segments follow: residues 137–157 (ISPK…CFLL) and 161–181 (VTLA…VGQL). The HXXXXD motif signature appears at 229–234 (HTSPID). The interval 429 to 457 (GNGSPSLALDSSTVDNHGSPEPAFRSESL) is disordered. The segment covering 431–444 (GSPSLALDSSTVDN) has biased composition (polar residues).

It belongs to the 1-acyl-sn-glycerol-3-phosphate acyltransferase family.

The protein localises to the endoplasmic reticulum membrane. It catalyses the reaction sn-glycerol 3-phosphate + an acyl-CoA = a 1-acyl-sn-glycero-3-phosphate + CoA. It carries out the reaction a 1-acyl-sn-glycero-3-phosphate + an acyl-CoA = a 1,2-diacyl-sn-glycero-3-phosphate + CoA. The enzyme catalyses dodecanoyl-CoA + sn-glycerol 3-phosphate = 1-dodecanoyl-sn-glycerol 3-phosphate + CoA. The catalysed reaction is sn-glycerol 3-phosphate + hexadecanoyl-CoA = 1-hexadecanoyl-sn-glycero-3-phosphate + CoA. It catalyses the reaction sn-glycerol 3-phosphate + (9Z)-octadecenoyl-CoA = 1-(9Z-octadecenoyl)-sn-glycero-3-phosphate + CoA. It carries out the reaction (9Z,12Z)-octadecadienoyl-CoA + sn-glycerol 3-phosphate = 1-(9Z,12Z)-octadecadienoyl-sn-glycero-3-phosphate + CoA. The enzyme catalyses 1-tetradecanoyl-sn-glycerol 3-phosphate + (9Z)-octadecenoyl-CoA = 1-tetradecanoyl-2-(9Z)-octadecenoyl-sn-glycero-3-phosphate + CoA. The catalysed reaction is 1-hexadecanoyl-sn-glycero-3-phosphate + (9Z)-octadecenoyl-CoA = 1-hexadecanoyl-2-(9Z-octadecenoyl)-sn-glycero-3-phosphate + CoA. It catalyses the reaction 1-(9Z-octadecenoyl)-sn-glycero-3-phosphate + (9Z)-octadecenoyl-CoA = 1,2-di-(9Z-octadecenoyl)-sn-glycero-3-phosphate + CoA. It carries out the reaction 1-(6Z,9Z,12Z-octadecatrienoyl)-sn-glycero-3-phosphate + (9Z)-octadecenoyl-CoA = (6Z,9Z,12Z)-octadecatrienoyl-2-(9Z)-octadecenoyl-sn-glycero-3-phosphate + CoA. The enzyme catalyses 1-(9Z,12Z,15Z)-octadecatrienoyl-sn-glycero-3-phosphate + (9Z)-octadecenoyl-CoA = 1-(9Z,12Z,15Z)-octadecatrienoyl-2-(9Z)-octadecenoyl-sn-glycero-3-phosphate + CoA. The catalysed reaction is 1-(9Z-octadecenoyl)-sn-glycero-3-phosphate + tetradecanoyl-CoA = 1-(9Z)-octadecenoyl-2-tetradecanoyl-sn-glycero-3-phosphate + CoA. It catalyses the reaction 1-(9Z-octadecenoyl)-sn-glycero-3-phosphate + hexadecanoyl-CoA = 1-(9Z)-octadecenoyl-2-hexadecanoyl-sn-glycero-3-phosphate + CoA. It carries out the reaction 1-(9Z-octadecenoyl)-sn-glycero-3-phosphate + octadecanoyl-CoA = 1-(9Z-octadecenoyl)-2-octadecanoyl-sn-glycero-3-phosphate + CoA. The enzyme catalyses 1-(9Z-octadecenoyl)-sn-glycero-3-phosphate + (9Z,12Z)-octadecadienoyl-CoA = 1-(9Z)-octadecenoyl-2-(9Z,12Z)-octadecadienoyl-sn-glycero-3-phosphate + CoA. The catalysed reaction is 1-(5Z,8Z,11Z,14Z-eicosatetraenoyl)-sn-glycero-3-phosphate + (9Z)-octadecenoyl-CoA = 1-(5Z,8Z,11Z,14Z)-eicosatetraenoyl-2-(9Z)-octadecenoyl-sn-glycero-3-phosphate + CoA. The protein operates within glycerolipid metabolism; triacylglycerol biosynthesis. It functions in the pathway phospholipid metabolism; CDP-diacylglycerol biosynthesis; CDP-diacylglycerol from sn-glycerol 3-phosphate: step 1/3. Its function is as follows. Converts glycerol-3-phosphate to 1-acyl-sn-glycerol-3-phosphate (lysophosphatidic acid or LPA) by incorporating an acyl moiety at the sn-1 position of the glycerol backbone. Also converts LPA into 1,2-diacyl-sn-glycerol-3-phosphate (phosphatidic acid or PA) by incorporating an acyl moiety at the sn-2 position of the glycerol backbone. Protects cells against lipotoxicity. The sequence is that of Glycerol-3-phosphate acyltransferase 3 from Rattus norvegicus (Rat).